We begin with the raw amino-acid sequence, 162 residues long: UPF0114 protein PSEEN0819 (162 aa).

The next 3 helical transmembrane spans lie at leucine 15–phenylalanine 35, leucine 53–valine 73, and leucine 136–leucine 156.

It belongs to the UPF0114 family.

It localises to the cell membrane. The polypeptide is UPF0114 protein PSEEN0819 (Pseudomonas entomophila (strain L48)).